A 337-amino-acid chain; its full sequence is GTP 3',8-cyclase (337 aa).

Residues 17 to 243 enclose the Radical SAM core domain; the sequence is PFQRQYYYLR…HKSHTDGPAK (227 aa). R26 serves as a coordination point for GTP. [4Fe-4S] cluster-binding residues include C33 and C37. Y39 contributes to the S-adenosyl-L-methionine binding site. Residue C40 participates in [4Fe-4S] cluster binding. Residue R76 coordinates GTP. G80 provides a ligand contact to S-adenosyl-L-methionine. T107 contributes to the GTP binding site. Residue S131 coordinates S-adenosyl-L-methionine. K168 contacts GTP. Position 202 (M202) interacts with S-adenosyl-L-methionine. Residues C265 and C268 each contribute to the [4Fe-4S] cluster site. 270–272 is a binding site for GTP; the sequence is RLR. C282 lines the [4Fe-4S] cluster pocket.

Belongs to the radical SAM superfamily. MoaA family. In terms of assembly, monomer and homodimer. [4Fe-4S] cluster is required as a cofactor.

The catalysed reaction is GTP + AH2 + S-adenosyl-L-methionine = (8S)-3',8-cyclo-7,8-dihydroguanosine 5'-triphosphate + 5'-deoxyadenosine + L-methionine + A + H(+). The protein operates within cofactor biosynthesis; molybdopterin biosynthesis. Catalyzes the cyclization of GTP to (8S)-3',8-cyclo-7,8-dihydroguanosine 5'-triphosphate. The sequence is that of GTP 3',8-cyclase from Haemophilus influenzae (strain 86-028NP).